Consider the following 158-residue polypeptide: 2-C-methyl-D-erythritol 2,4-cyclodiphosphate synthase (158 aa).

A divalent metal cation contacts are provided by D9 and H11. 4-CDP-2-C-methyl-D-erythritol 2-phosphate contacts are provided by residues 9–11 (DVH) and 35–36 (HS). Residue H43 participates in a divalent metal cation binding. 4-CDP-2-C-methyl-D-erythritol 2-phosphate-binding positions include 57–59 (DIG), 62–66 (FPDTD), 101–107 (AQKPKMA), 133–136 (TTTE), F140, and R143.

This sequence belongs to the IspF family. As to quaternary structure, homotrimer. A divalent metal cation is required as a cofactor.

It catalyses the reaction 4-CDP-2-C-methyl-D-erythritol 2-phosphate = 2-C-methyl-D-erythritol 2,4-cyclic diphosphate + CMP. The protein operates within isoprenoid biosynthesis; isopentenyl diphosphate biosynthesis via DXP pathway; isopentenyl diphosphate from 1-deoxy-D-xylulose 5-phosphate: step 4/6. In terms of biological role, involved in the biosynthesis of isopentenyl diphosphate (IPP) and dimethylallyl diphosphate (DMAPP), two major building blocks of isoprenoid compounds. Catalyzes the conversion of 4-diphosphocytidyl-2-C-methyl-D-erythritol 2-phosphate (CDP-ME2P) to 2-C-methyl-D-erythritol 2,4-cyclodiphosphate (ME-CPP) with a corresponding release of cytidine 5-monophosphate (CMP). The chain is 2-C-methyl-D-erythritol 2,4-cyclodiphosphate synthase from Bacillus cytotoxicus (strain DSM 22905 / CIP 110041 / 391-98 / NVH 391-98).